Reading from the N-terminus, the 120-residue chain is NAD(P)H-quinone oxidoreductase subunit 3, chloroplastic (120 aa).

3 helical membrane-spanning segments follow: residues 2–22 (FLLY…VIPI), 64–84 (MFAL…PWAL), and 88–108 (ILGV…VLGL).

Belongs to the complex I subunit 3 family. As to quaternary structure, NDH is composed of at least 16 different subunits, 5 of which are encoded in the nucleus.

The protein localises to the plastid. Its subcellular location is the chloroplast thylakoid membrane. It carries out the reaction a plastoquinone + NADH + (n+1) H(+)(in) = a plastoquinol + NAD(+) + n H(+)(out). The enzyme catalyses a plastoquinone + NADPH + (n+1) H(+)(in) = a plastoquinol + NADP(+) + n H(+)(out). Functionally, NDH shuttles electrons from NAD(P)H:plastoquinone, via FMN and iron-sulfur (Fe-S) centers, to quinones in the photosynthetic chain and possibly in a chloroplast respiratory chain. The immediate electron acceptor for the enzyme in this species is believed to be plastoquinone. Couples the redox reaction to proton translocation, and thus conserves the redox energy in a proton gradient. This Oenothera argillicola (Appalachian evening primrose) protein is NAD(P)H-quinone oxidoreductase subunit 3, chloroplastic.